The primary structure comprises 318 residues: Small ribosomal subunit protein uS2 (318 aa).

This sequence belongs to the universal ribosomal protein uS2 family.

This chain is Small ribosomal subunit protein uS2, found in Mesomycoplasma hyopneumoniae (strain J / ATCC 25934 / NCTC 10110) (Mycoplasma hyopneumoniae).